The sequence spans 74 residues: Protein sok (74 aa).

Residues 26-45 (TQHGNKPPSRHEAESLKRRA) are disordered.

This Escherichia coli protein is Protein sok (sok).